An 85-amino-acid polypeptide reads, in one-letter code: Large ribosomal subunit protein bL27 (85 aa).

The protein belongs to the bacterial ribosomal protein bL27 family.

The polypeptide is Large ribosomal subunit protein bL27 (Xylella fastidiosa (strain Temecula1 / ATCC 700964)).